An 81-amino-acid polypeptide reads, in one-letter code: Protein Vpu (81 aa).

Over 1–7 (MQPLQIL) the chain is Extracellular. A helical membrane pass occupies residues 8–28 (SIVALVVAAIIAIVVWSIVFI). At 29–81 (LIRKILRQRKIDRLIDRIRERAEDSGNESEGIRKELSALVEMGHDAPGDIDDL) the chain is on the cytoplasmic side. 2 positions are modified to phosphoserine; by host CK2: S53 and S57.

Belongs to the HIV-1 VPU protein family. In terms of assembly, homopentamer. Interacts with host CD4 and BRTC; these interactions induce proteasomal degradation of CD4. Interacts with host BST2; this interaction leads to the degradation of host BST2. Interacts with host FBXW11. Interacts with host AP1M1; this interaction plays a role in the mistrafficking and subsequent degradation of host BST2. Interacts with host RANBP2; this interaction allows Vpu to down-regulate host BLM sumoylation. In terms of processing, phosphorylated by host CK2. This phosphorylation is necessary for interaction with human BTRC and degradation of CD4.

Its subcellular location is the host membrane. With respect to regulation, ion channel activity is inhibited by hexamethylene amiloride in vitro. Functionally, enhances virion budding by targeting host CD4 and Tetherin/BST2 to proteasome degradation. Degradation of CD4 prevents any unwanted premature interactions between viral Env and its host receptor CD4 in the endoplasmic reticulum. Degradation of antiretroviral protein Tetherin/BST2 is important for virion budding, as BST2 tethers new viral particles to the host cell membrane. Mechanistically, Vpu bridges either CD4 or BST2 to BTRC, a substrate recognition subunit of the Skp1/Cullin/F-box protein E3 ubiquitin ligase, induces their ubiquitination and subsequent proteasomal degradation. The alteration of the E3 ligase specificity by Vpu seems to promote the degradation of host IKBKB, leading to NF-kappa-B down-regulation and subsequent apoptosis. Acts as a viroporin that forms an oligomeric ion channel in membranes. Modulates the host DNA repair mechanisms to promote degradation of nuclear viral cDNA in cells that are already productively infected in order to suppress immune sensing and proviral hyper-integration (superinfection). Manipulates PML-NBs and modulates SUMOylation of host BLM protein thereby enhancing its DNA-end processing activity toward viral unintegrated linear DNA. Also inhibits RAD52-mediated homologous repair of viral cDNA, preventing the generation of dead-end circular forms of single copies of the long terminal repeat and permitting sustained nucleolytic attack. The protein is Protein Vpu of Homo sapiens (Human).